Consider the following 326-residue polypeptide: 4-hydroxythreonine-4-phosphate dehydrogenase (326 aa).

Substrate-binding residues include H134 and T135. Residues H164, H209, and H264 each contribute to the a divalent metal cation site. 3 residues coordinate substrate: K272, N281, and R290.

This sequence belongs to the PdxA family. As to quaternary structure, homodimer. It depends on Zn(2+) as a cofactor. Mg(2+) serves as cofactor. The cofactor is Co(2+).

It is found in the cytoplasm. The catalysed reaction is 4-(phosphooxy)-L-threonine + NAD(+) = 3-amino-2-oxopropyl phosphate + CO2 + NADH. It functions in the pathway cofactor biosynthesis; pyridoxine 5'-phosphate biosynthesis; pyridoxine 5'-phosphate from D-erythrose 4-phosphate: step 4/5. Functionally, catalyzes the NAD(P)-dependent oxidation of 4-(phosphooxy)-L-threonine (HTP) into 2-amino-3-oxo-4-(phosphooxy)butyric acid which spontaneously decarboxylates to form 3-amino-2-oxopropyl phosphate (AHAP). The sequence is that of 4-hydroxythreonine-4-phosphate dehydrogenase from Colwellia psychrerythraea (strain 34H / ATCC BAA-681) (Vibrio psychroerythus).